The sequence spans 222 residues: Protein-L-isoaspartate O-methyltransferase (222 aa).

Serine 65 is a catalytic residue.

Belongs to the methyltransferase superfamily. L-isoaspartyl/D-aspartyl protein methyltransferase family.

It is found in the cytoplasm. The enzyme catalyses [protein]-L-isoaspartate + S-adenosyl-L-methionine = [protein]-L-isoaspartate alpha-methyl ester + S-adenosyl-L-homocysteine. In terms of biological role, catalyzes the methyl esterification of L-isoaspartyl residues in peptides and proteins that result from spontaneous decomposition of normal L-aspartyl and L-asparaginyl residues. It plays a role in the repair and/or degradation of damaged proteins. The protein is Protein-L-isoaspartate O-methyltransferase of Chlorobium luteolum (strain DSM 273 / BCRC 81028 / 2530) (Pelodictyon luteolum).